We begin with the raw amino-acid sequence, 408 residues long: Putative UPF0496 protein 2 (408 aa).

The next 2 membrane-spanning stretches (helical) occupy residues 224-244 and 252-272; these read RIAR…AIVA and ALVG…GAAR. Positions 385–408 are disordered; that stretch reads MARGLPPPSPATVTTTSEERLTSS.

This sequence belongs to the UPF0496 family.

It localises to the membrane. In Oryza sativa subsp. indica (Rice), this protein is Putative UPF0496 protein 2.